Reading from the N-terminus, the 513-residue chain is GMP synthase [glutamine-hydrolyzing] (513 aa).

One can recognise a Glutamine amidotransferase type-1 domain in the interval 8-198; it reads MILVLDFGSQ…VFGVCECVGE (191 aa). Catalysis depends on Cys-85, which acts as the Nucleophile. Catalysis depends on residues His-172 and Glu-174. A GMPS ATP-PPase domain is found at 199–388; sequence WSMENFIEIE…LGIPDEIVWR (190 aa). 226-232 serves as a coordination point for ATP; sequence SGGVDSS.

Homodimer.

The catalysed reaction is XMP + L-glutamine + ATP + H2O = GMP + L-glutamate + AMP + diphosphate + 2 H(+). It functions in the pathway purine metabolism; GMP biosynthesis; GMP from XMP (L-Gln route): step 1/1. In terms of biological role, catalyzes the synthesis of GMP from XMP. The protein is GMP synthase [glutamine-hydrolyzing] of Bacillus licheniformis (strain ATCC 14580 / DSM 13 / JCM 2505 / CCUG 7422 / NBRC 12200 / NCIMB 9375 / NCTC 10341 / NRRL NRS-1264 / Gibson 46).